A 377-amino-acid polypeptide reads, in one-letter code: Spermidine/putrescine import ATP-binding protein PotA (377 aa).

The ABC transporter domain maps to 22 to 252; sequence VRLQNVTKRF…PANRFVADFI (231 aa). 54–61 serves as a coordination point for ATP; that stretch reads GPSGCGKT.

It belongs to the ABC transporter superfamily. Spermidine/putrescine importer (TC 3.A.1.11.1) family. In terms of assembly, the complex is composed of two ATP-binding proteins (PotA), two transmembrane proteins (PotB and PotC) and a solute-binding protein (PotD).

It is found in the cell membrane. It catalyses the reaction ATP + H2O + polyamine-[polyamine-binding protein]Side 1 = ADP + phosphate + polyamineSide 2 + [polyamine-binding protein]Side 1.. Functionally, part of the ABC transporter complex PotABCD involved in spermidine/putrescine import. Responsible for energy coupling to the transport system. The polypeptide is Spermidine/putrescine import ATP-binding protein PotA (Rubrobacter xylanophilus (strain DSM 9941 / JCM 11954 / NBRC 16129 / PRD-1)).